The primary structure comprises 1152 residues: Syntaxin-binding protein 5 (1152 aa).

Positions 14–35 (TAGSSSASQQQQQQQHPPGNRE) are disordered. Low complexity predominate over residues 17–28 (SSSASQQQQQQQ). WD repeat units follow at residues 62–95 (SALA…CYCQ), 102–141 (VIQL…SLKF), 146–182 (VTFC…GYVI), 201–235 (HISD…DYRY), 241–273 (IHSV…PTKP), 295–337 (PILK…KSTA), 345–379 (IVDF…LIDL), 401–478 (TCCE…YKLK), 506–620 (QIIS…ELVI), and 634–696 (TSLA…SGAG). 2 disordered regions span residues 557 to 596 (TPEG…GLRD) and 675 to 731 (SNDP…QKVN). Serine 693 is modified (phosphoserine). Residues 713-722 (SPTSGSSSPH) are compositionally biased toward low complexity. Serine 724 carries the phosphoserine; by PKA modification. Serine 760 carries the post-translational modification Phosphoserine. The residue at position 763 (threonine 763) is a Phosphothreonine. Serine 783 bears the Phosphoserine mark. Threonine 785 is subject to Phosphothreonine. Position 786 is a phosphoserine (serine 786). WD repeat units lie at residues 795 to 852 (ISAL…SGTI), 861 to 935 (RMAF…QNCA), 940 to 984 (ITET…LDVY), and 998 to 1021 (CFAN…TYSQ). Residues 879 to 893 (WTEHNVPEEKDEKEK) are compositionally biased toward basic and acidic residues. The tract at residues 879–907 (WTEHNVPEEKDEKEKLKKRRPVSVSPSSS) is disordered. A phosphoserine mark is found at serine 901 and serine 903. Threonine 1040 carries the post-translational modification Phosphothreonine. Residues serine 1059 and serine 1132 each carry the phosphoserine modification. Residues 1087-1147 (GIEGVKGAAS…HEMMLKYKDK (61 aa)) form the v-SNARE coiled-coil homology domain.

Belongs to the WD repeat L(2)GL family. As to quaternary structure, part of a complex that contains STXBP5, STX4A and SNAP23. Interacts with STX1A and STX4A via its v-SNARE homology domain. Part of a complex that contains STX1, STXBP5, SNAP25 and SYT1. In terms of processing, phosphorylation by PKA reduces interaction with STX1A and enhances synaptic neurotransmitter release. Isoform 1 is detected in heart, brain, lung, liver, skeletal muscle, kidney and testis. Isoform 2 is detected in brain and in testis. Isoform 3 is detected in testis.

It localises to the cytoplasm. It is found in the cell membrane. The protein localises to the cytoplasmic vesicle membrane. The protein resides in the synapse. Its subcellular location is the cytoplasmic vesicle. It localises to the secretory vesicle. It is found in the synaptic vesicle. Its function is as follows. Inhibits translocation of GLUT4 from intracellular vesicles to the plasma membrane. Plays a regulatory role in calcium-dependent exocytosis and neurotransmitter release. Inhibits membrane fusion between transport vesicles and the plasma membrane. May modulate the assembly of trans-SNARE complexes between transport vesicles and the plasma membrane. Competes with STXBP1 for STX1 binding. The chain is Syntaxin-binding protein 5 (Stxbp5) from Rattus norvegicus (Rat).